The sequence spans 384 residues: 3,7-dimethylxanthine N-methyltransferase 2 (384 aa).

8 residues coordinate S-adenosyl-L-homocysteine: Y18, C61, N66, D100, L101, S139, F140, and C156. Y157 is a binding site for theobromine. Residue C158 participates in S-adenosyl-L-homocysteine binding. Residues H160 and W161 each contribute to the theobromine site. N178 is a binding site for Mg(2+). Position 237 (S237) interacts with theobromine. D260, F262, and N263 together coordinate Mg(2+). Y368 serves as a coordination point for theobromine.

This sequence belongs to the methyltransferase superfamily. Type-7 methyltransferase family. It depends on Mg(2+) as a cofactor. In terms of tissue distribution, highly expressed in developing endosperm. Detected in young leaves and flower buds. Present in immature fruits (grains), but barely in mature fruits.

It carries out the reaction 7-methylxanthine + S-adenosyl-L-methionine = theobromine + S-adenosyl-L-homocysteine + H(+). It catalyses the reaction theobromine + S-adenosyl-L-methionine = caffeine + S-adenosyl-L-homocysteine + H(+). The enzyme catalyses 1,7-dimethylxanthine + S-adenosyl-L-methionine = caffeine + S-adenosyl-L-homocysteine + H(+). It functions in the pathway alkaloid biosynthesis. In terms of biological role, involved in the biosynthesis of caffeine. Catalyzes the conversion of 7-methylxanthine (7mX) to theobromine and of theobromine to caffeine. Has 1-N-methylation activity. The chain is 3,7-dimethylxanthine N-methyltransferase 2 from Coffea arabica (Arabian coffee).